The chain runs to 372 residues: tRNA pseudouridine synthase D (372 aa).

D85 serves as the catalytic Nucleophile. Positions 160–330 (GFANYFGYQR…MQGSRRFMWG (171 aa)) constitute a TRUD domain.

The protein belongs to the pseudouridine synthase TruD family.

It carries out the reaction uridine(13) in tRNA = pseudouridine(13) in tRNA. In terms of biological role, responsible for synthesis of pseudouridine from uracil-13 in transfer RNAs. This Campylobacter jejuni subsp. jejuni serotype O:2 (strain ATCC 700819 / NCTC 11168) protein is tRNA pseudouridine synthase D.